A 440-amino-acid polypeptide reads, in one-letter code: 3-phosphoshikimate 1-carboxyvinyltransferase (440 aa).

Lys-19, Ser-20, and Arg-24 together coordinate 3-phosphoshikimate. Residue Lys-19 participates in phosphoenolpyruvate binding. The phosphoenolpyruvate site is built by Gly-92 and Arg-121. 3-phosphoshikimate is bound by residues Ser-166, Gln-168, Asp-315, and Lys-342. Gln-168 contributes to the phosphoenolpyruvate binding site. The Proton acceptor role is filled by Asp-315. Residues Arg-346 and Arg-399 each coordinate phosphoenolpyruvate.

The protein belongs to the EPSP synthase family. In terms of assembly, monomer.

Its subcellular location is the cytoplasm. It catalyses the reaction 3-phosphoshikimate + phosphoenolpyruvate = 5-O-(1-carboxyvinyl)-3-phosphoshikimate + phosphate. It functions in the pathway metabolic intermediate biosynthesis; chorismate biosynthesis; chorismate from D-erythrose 4-phosphate and phosphoenolpyruvate: step 6/7. Catalyzes the transfer of the enolpyruvyl moiety of phosphoenolpyruvate (PEP) to the 5-hydroxyl of shikimate-3-phosphate (S3P) to produce enolpyruvyl shikimate-3-phosphate and inorganic phosphate. The chain is 3-phosphoshikimate 1-carboxyvinyltransferase from Leptospira interrogans serogroup Icterohaemorrhagiae serovar Lai (strain 56601).